A 763-amino-acid polypeptide reads, in one-letter code: MPPIPSLWIRVFFSWLLLSLPAAAAADFSHCGGCDDGDGGGGIWSTDNILQCQRVSDFLIAMAYFSIPLELLYFATCSDLFPLKWIVLQFGAFIVLCGLTHLITMFTYEPHSFHVVLALTVAKFLTALVSFATAITLLTLIPQLLRVKVRENFLRIKARELDREVGMMKRQEEASWHVRMLTHEIRKSLDRHTILYTTMVELSKTLELQNCAVWMPSESGSEMILTHQLRQMETEDSNSLSIAMDNPDVLEIKATKDAKVLAADSALGIASRGKLEAGPVAAIRMPMLKASNFKGGTPEVMETSYAILVLVLPEDGSLGWGEEELEIVEVVADQVAVALSHAAVLEESQLMREKLAAQHRDLLRAKHETTMATEARNSFQTAMYDGMRRPMHSILGLVSMMQQENMNPEQRLVMDAIVKTSSVASTLMNDVMQTSTVNREYLSLVRRAFNLHSLVKEAISVVRCLTGCKGIDFEFEVDNSLPERVVGDEKRVFHIVLHMVGTLIQRCNAGCLSLYVNTYNEKEERHNQDWMLRRANFSGSYVCVKFEIRIRESRGNLLSSSSSRRLQGPNSTSSEMGLSFNMCKKIVQMMNGNIWSVSDSKGLGETIMLALQFQLQHVTPVSGASSDLFRSAPIPNFNGLQVILVDSDDTNRAVTHKLLEKLGCLVLSVTSGIQCINSFASAESSFQLVVLDLTMRTMDGFDVALAIRKFRGNCWPPLIVALAASTDDTVRDRCQQAGINGLIQKPVTLAALGDELYRVLQNN.

3 helical membrane-spanning segments follow: residues 58–78 (FLIA…ATCS), 86–106 (IVLQ…ITMF), and 115–135 (VVLA…ATAI). Residues C97 and H101 each contribute to the Cu cation site. Residues 190–339 (DRHTILYTTM…VVADQVAVAL (150 aa)) form the GAF domain. In terms of domain architecture, Histidine kinase spans 382–615 (AMYDGMRRPM…TIMLALQFQL (234 aa)). Positions 641-760 (QVILVDSDDT…ALGDELYRVL (120 aa)) constitute a Response regulatory domain. 4-aspartylphosphate is present on D692.

This sequence belongs to the ethylene receptor family. Cu cation is required as a cofactor. Autophosphorylated on serine, threonine and tyrosine residues.

It is found in the endoplasmic reticulum membrane. The enzyme catalyses ATP + protein L-histidine = ADP + protein N-phospho-L-histidine.. Ethylene receptor related to bacterial two-component regulators. Acts as a negative regulator of ethylene signaling. May delay the transition from the vegetative stage to the floral stage by up-regulating GI (GIGANTEA) and RCN1 and cause starch accumulation in stems by down-regulating the alpha-amylase AMY3D. This is Ethylene receptor 2 from Oryza sativa subsp. japonica (Rice).